Reading from the N-terminus, the 356-residue chain is MAIVSSGFEKHSSSNLSRKTRLLDPTPSLEEGKVRKEDSLRPKCWDEFIGQSALKEVLGISVKAALSRKEALDHVLLYGPPGLGKTTMALVLGNELGVKCRITSAPALERPRDIIGLLLNLEPNELLFVDEIHRLSKVAEELLYPALEDFRIDLTVGKGTTARTREINLPRFTLVGATTKPASISSPLRDRFGITQRLNFYSISDLNRIIQRAADLFGLSLTGDAGLEIARRCRGTPRIANRLLRRVRDYATVQNQLKLVDKSLVDKSLTLHQVDECGLDQSDRRFLLFIIDVHNGGPVGLDTLAAALGEEAATLESVVEPFLLQIGFLKRTSRGRVITQAALEHLNSCKNSPIIK.

Positions 13-201 are large ATPase domain (RuvB-L); it reads SSNLSRKTRL…FGITQRLNFY (189 aa). The tract at residues 15 to 35 is disordered; it reads NLSRKTRLLDPTPSLEEGKVR. ATP is bound by residues Leu40, Arg41, Gly82, Lys85, Thr86, Thr87, 148 to 150, Arg191, Tyr201, and Arg238; that span reads EDF. Residue Thr86 participates in Mg(2+) binding. The interval 202–273 is small ATPAse domain (RuvB-S); it reads SISDLNRIIQ…LVDKSLTLHQ (72 aa). A head domain (RuvB-H) region spans residues 276–356; sequence ECGLDQSDRR…NSCKNSPIIK (81 aa). DNA-binding residues include Arg331 and Arg336.

The protein belongs to the RuvB family. In terms of assembly, homohexamer. Forms an RuvA(8)-RuvB(12)-Holliday junction (HJ) complex. HJ DNA is sandwiched between 2 RuvA tetramers; dsDNA enters through RuvA and exits via RuvB. An RuvB hexamer assembles on each DNA strand where it exits the tetramer. Each RuvB hexamer is contacted by two RuvA subunits (via domain III) on 2 adjacent RuvB subunits; this complex drives branch migration. In the full resolvosome a probable DNA-RuvA(4)-RuvB(12)-RuvC(2) complex forms which resolves the HJ.

It localises to the cytoplasm. The enzyme catalyses ATP + H2O = ADP + phosphate + H(+). In terms of biological role, the RuvA-RuvB-RuvC complex processes Holliday junction (HJ) DNA during genetic recombination and DNA repair, while the RuvA-RuvB complex plays an important role in the rescue of blocked DNA replication forks via replication fork reversal (RFR). RuvA specifically binds to HJ cruciform DNA, conferring on it an open structure. The RuvB hexamer acts as an ATP-dependent pump, pulling dsDNA into and through the RuvAB complex. RuvB forms 2 homohexamers on either side of HJ DNA bound by 1 or 2 RuvA tetramers; 4 subunits per hexamer contact DNA at a time. Coordinated motions by a converter formed by DNA-disengaged RuvB subunits stimulates ATP hydrolysis and nucleotide exchange. Immobilization of the converter enables RuvB to convert the ATP-contained energy into a lever motion, pulling 2 nucleotides of DNA out of the RuvA tetramer per ATP hydrolyzed, thus driving DNA branch migration. The RuvB motors rotate together with the DNA substrate, which together with the progressing nucleotide cycle form the mechanistic basis for DNA recombination by continuous HJ branch migration. Branch migration allows RuvC to scan DNA until it finds its consensus sequence, where it cleaves and resolves cruciform DNA. The chain is Holliday junction branch migration complex subunit RuvB from Prochlorococcus marinus (strain SARG / CCMP1375 / SS120).